A 444-amino-acid chain; its full sequence is tRNA modification GTPase MnmE (444 aa).

(6S)-5-formyl-5,6,7,8-tetrahydrofolate-binding residues include Arg-28, Glu-86, and Arg-126. The TrmE-type G domain occupies 224 to 368 (GFCVVLAGAP…LLDAIQGSAA (145 aa)). Residue Asn-234 participates in K(+) binding. Residues 234–239 (NAGKST), 253–259 (SDIPGTT), and 278–281 (DTAG) contribute to the GTP site. Residue Ser-238 participates in Mg(2+) binding. K(+) is bound by residues Ser-253, Ile-255, and Thr-258. Thr-259 lines the Mg(2+) pocket. Lys-444 provides a ligand contact to (6S)-5-formyl-5,6,7,8-tetrahydrofolate.

This sequence belongs to the TRAFAC class TrmE-Era-EngA-EngB-Septin-like GTPase superfamily. TrmE GTPase family. Homodimer. Heterotetramer of two MnmE and two MnmG subunits. It depends on K(+) as a cofactor.

The protein localises to the cytoplasm. Its function is as follows. Exhibits a very high intrinsic GTPase hydrolysis rate. Involved in the addition of a carboxymethylaminomethyl (cmnm) group at the wobble position (U34) of certain tRNAs, forming tRNA-cmnm(5)s(2)U34. This Methylorubrum populi (strain ATCC BAA-705 / NCIMB 13946 / BJ001) (Methylobacterium populi) protein is tRNA modification GTPase MnmE.